Consider the following 105-residue polypeptide: Endogenous retrovirus group K member 104 Rec protein (105 aa).

Positions M1–K43 are disordered. Over residues A10–N19 the composition is skewed to basic residues. Residues R13–R20 carry the Nuclear localization signal motif. The Nuclear export signal signature appears at W50–L59.

Forms homodimers, homotrimers, and homotetramers via a C-terminal domain. Associates with XPO1 and with ZNF145.

Its subcellular location is the cytoplasm. The protein resides in the nucleus. The protein localises to the nucleolus. Retroviral replication requires the nuclear export and translation of unspliced, singly-spliced and multiply-spliced derivatives of the initial genomic transcript. Rec interacts with a highly structured RNA element (RcRE) present in the viral 3'LTR and recruits the cellular nuclear export machinery. This permits export to the cytoplasm of unspliced genomic or incompletely spliced subgenomic viral transcripts. This Homo sapiens (Human) protein is Endogenous retrovirus group K member 104 Rec protein (HERV-K104).